A 354-amino-acid polypeptide reads, in one-letter code: Ferrochelatase (354 aa).

Fe cation is bound by residues H204 and E306.

The protein belongs to the ferrochelatase family.

It is found in the cytoplasm. The enzyme catalyses heme b + 2 H(+) = protoporphyrin IX + Fe(2+). It functions in the pathway porphyrin-containing compound metabolism; protoheme biosynthesis; protoheme from protoporphyrin-IX: step 1/1. In terms of biological role, catalyzes the ferrous insertion into protoporphyrin IX. The protein is Ferrochelatase of Coxiella burnetii (strain CbuK_Q154) (Coxiella burnetii (strain Q154)).